Reading from the N-terminus, the 1756-residue chain is Multifunctional conjugation protein TraI (1756 aa).

The DNA relaxase stretch occupies residues 1–330; it reads MLSFSVVKSA…TQAIAGLSER (330 aa). Tyrosine 16 acts as the O-(5'-phospho-DNA)-tyrosine intermediate; for relaxase activity in catalysis. The Relaxase role is filled by tyrosine 17. Residues histidine 146, histidine 157, and histidine 159 each contribute to the Mg(2+) site. Residues 950-1500 are DNA helicase I; it reads GKEAVTPLME…LRDVAAGRAV (551 aa). Residue 992–999 coordinates ATP; sequence GYAGVGKT. A coiled-coil region spans residues 1719 to 1753; sequence EQEAVREVARENLLQERLQQIERDMVRDLQKEKTL.

This sequence to TraI of plasmid F. As to quaternary structure, monomer. Part of the relaxosome, a complex composed of plasmid-encodes TraI, TraM, TraY and host-encoded IHF bound to the F plasmid origin of transfer (oriT). Directly contacts coupling protein TraD. Seems to directly contact TraM via its C-terminus. Mg(2+) is required as a cofactor.

The protein localises to the cytoplasm. It catalyses the reaction ATP-independent breakage of single-stranded DNA, followed by passage and rejoining.. The enzyme catalyses ATP + H2O = ADP + phosphate + H(+). Conjugative DNA transfer (CDT) is the unidirectional transfer of ssDNA plasmid from a donor to a recipient cell. It is the central mechanism by which antibiotic resistance and virulence factors are propagated in bacterial populations. Part of the relaxosome, which facilitates a site- and strand-specific cut in the origin of transfer by TraI, at the nic site. Relaxosome formation requires binding of IHF and TraY to the oriT region, which then facilitates binding of TraI relaxase. TraI forms a covalent 5'-phosphotyrosine intermediate linkage to the ssDNA. The transesterified T-strand moves from the donor cell to the recipient cell in a 5'to 3' direction, with the DNA helicase activity of TraI unwinding the DNA. DNA transfer occurs via the conjugative pore (transferosome) an intercellular junction mediated by a type IV secretion system, with TraD providing the means to link the relaxosome to the conjugative pore. The relaxase completes DNA transfer by reversing the covalent phosphotyrosine linkage and releasing the T-strand. Its function is as follows. TraI has also been identified as DNA helicase I. DNA. helicase I is a potent, highly processive DNA-dependent ATPase, able to unwind about 1.1 kb dsDNA per second in a 5' to 3' manner. The chain is Multifunctional conjugation protein TraI (traI) from Escherichia coli.